The primary structure comprises 597 residues: Aspartate--tRNA ligase (597 aa).

Glutamate 173 lines the L-aspartate pocket. Residues 197–200 form an aspartate region; that stretch reads QLFK. Residue arginine 219 participates in L-aspartate binding. Residues 219-221 and glutamine 228 contribute to the ATP site; that span reads RDE. Histidine 449 serves as a coordination point for L-aspartate. An ATP-binding site is contributed by glutamate 483. Arginine 490 serves as a coordination point for L-aspartate. 535-538 provides a ligand contact to ATP; it reads GLDR.

It belongs to the class-II aminoacyl-tRNA synthetase family. Type 1 subfamily. In terms of assembly, homodimer.

Its subcellular location is the cytoplasm. It catalyses the reaction tRNA(Asp) + L-aspartate + ATP = L-aspartyl-tRNA(Asp) + AMP + diphosphate. Catalyzes the attachment of L-aspartate to tRNA(Asp) in a two-step reaction: L-aspartate is first activated by ATP to form Asp-AMP and then transferred to the acceptor end of tRNA(Asp). In Shewanella pealeana (strain ATCC 700345 / ANG-SQ1), this protein is Aspartate--tRNA ligase.